The chain runs to 731 residues: MLKEWAIKQGILLKVAETIKSWIFFSQCNKKDDLLHKLDIGFRLDSLHTILQQEVLLQEDVELIELLDPSILSAGQSQQQENGHLPTLCSLATPNIWDLSMLFAFISLLVMLPTWWIVSSWLVWGVILFVYLVIRALRLWRTAKLQVTLKKYSVHLEDMATNSRAFTNLVRKALRLIQETEVISRGFTLVSAACPFNKAGQHPSQHLIGLRKAVYRTLRANFQAARLATLYMLKNYPLNSESDNVTNYICVVPFKELGLGLSEEQISEEEAHNFTDGFSLPALKVLFQLWVAQSSEFFRRLALLLSTTNSPPGPLLTPALLPHRILSDVTQGLPHAHSACLEELKRSYEFYRYFETQHQSVPQCLSKTQQKSRELNNVHTAVRSLQLHLKALLNEVIILEDELEKLVCTKETQELVSEAYPILEQKLKLIQPHVQASNNCWEEAISQVDKLLRRNTDKKGKPEIACENPHCTVVPLKQPTLHIADKDPIPEEQELEAYVDDIDIDSDFRKDDFYYLSQEDKERQKLEHEESKRVLQELKSVLGFKASEAERQKWKQLLFSDHAVLKSLSPVDPVEPISNSEPSMNSDMGKVSKNDTEEESSKSTTTDNEISRTEYLCENSLEGKNKDNSSNEVFRQGAEERMCYQCESEDEPQADGSGLTTAPPTPRDSLQPSIKQRLARLQLSPDFTFTAGLAAEVAARSLSFTTMQEQTFGDEEEEQIIEENKNKIEEK.

The next 2 helical transmembrane spans lie at 91 to 111 (LATPNIWDLSMLFAFISLLVM) and 114 to 134 (TWWIVSSWLVWGVILFVYLVI). Residues 382–414 (VRSLQLHLKALLNEVIILEDELEKLVCTKETQE) are a coiled coil. 2 disordered regions span residues 570-671 (PVDP…DSLQ) and 710-731 (QTFGDEEEEQIIEENKNKIEEK). The span at 577-586 (ISNSEPSMNS) shows a compositional bias: polar residues. Over residues 590-601 (KVSKNDTEEESS) the composition is skewed to basic and acidic residues. Positions 658 to 671 (GLTTAPPTPRDSLQ) are enriched in polar residues. Residues 712 to 721 (FGDEEEEQII) show a composition bias toward acidic residues. The span at 722-731 (EENKNKIEEK) shows a compositional bias: basic and acidic residues.

It belongs to the vezatin family. Interacts with USH2A (via the cytoplasmic region); the interaction associates VEZT with the USH2 complex at the stereocilia base. Interacts with myosin MYO7A and the cadherin-catenins complex.

It localises to the cell membrane. The protein localises to the cell projection. It is found in the stereocilium membrane. The protein resides in the cell junction. Its subcellular location is the adherens junction. It localises to the nucleus. The protein localises to the cytoplasmic vesicle. It is found in the secretory vesicle. The protein resides in the acrosome. Plays a pivotal role in the establishment of adherens junctions and their maintenance in adult life. Required for morphogenesis of the preimplantation embryo, and for the implantation process. The sequence is that of Vezatin (VEZT) from Pongo abelii (Sumatran orangutan).